The chain runs to 477 residues: Glycogen synthase (477 aa).

Lys-15 is an ADP-alpha-D-glucose binding site.

Belongs to the glycosyltransferase 1 family. Bacterial/plant glycogen synthase subfamily.

It catalyses the reaction [(1-&gt;4)-alpha-D-glucosyl](n) + ADP-alpha-D-glucose = [(1-&gt;4)-alpha-D-glucosyl](n+1) + ADP + H(+). It participates in glycan biosynthesis; glycogen biosynthesis. Functionally, synthesizes alpha-1,4-glucan chains using ADP-glucose. This Streptococcus pneumoniae (strain JJA) protein is Glycogen synthase.